The sequence spans 734 residues: Probable carboxypeptidase X1 (734 aa).

The first 20 residues, 1–20 (MWGLLLALAAFAPAVGPALG), serve as a signal peptide directing secretion. Residues 30-62 (AQPGTTKVPGSTPALHSSPAQPPAETANGTSEQ) are disordered. Residues 32-48 (PGTTKVPGSTPALHSSP) are compositionally biased toward polar residues. N57, N210, N220, and N318 each carry an N-linked (GlcNAc...) asparagine glycan. The F5/8 type C domain maps to 113 to 274 (TGCPPLGLES…PCLRAEILAC (162 aa)). An intrachain disulfide couples C115 to C274. The Peptidase M14 domain maps to 298–621 (QHHNYKAMRK…DALLTYLEQV (324 aa)). Residues H360 and E363 each contribute to the Zn(2+) site. N428 and N472 each carry an N-linked (GlcNAc...) asparagine glycan. H498 provides a ligand contact to Zn(2+). E591 (proton donor/acceptor) is an active-site residue.

The protein belongs to the peptidase M14 family. It depends on Zn(2+) as a cofactor.

The protein resides in the secreted. In terms of biological role, may be involved in cell-cell interactions. No carboxypeptidase activity was found yet. The chain is Probable carboxypeptidase X1 (CPXM1) from Homo sapiens (Human).